Consider the following 298-residue polypeptide: Acetylglutamate kinase (298 aa).

Substrate contacts are provided by residues glycine 69–glycine 70, arginine 91, and asparagine 196.

The protein belongs to the acetylglutamate kinase family. ArgB subfamily.

The protein resides in the cytoplasm. It catalyses the reaction N-acetyl-L-glutamate + ATP = N-acetyl-L-glutamyl 5-phosphate + ADP. The protein operates within amino-acid biosynthesis; L-arginine biosynthesis; N(2)-acetyl-L-ornithine from L-glutamate: step 2/4. Its function is as follows. Catalyzes the ATP-dependent phosphorylation of N-acetyl-L-glutamate. This chain is Acetylglutamate kinase, found in Bradyrhizobium sp. (strain BTAi1 / ATCC BAA-1182).